We begin with the raw amino-acid sequence, 497 residues long: Histone-lysine N-methyltransferase ASHR3 (497 aa).

A PHD-type zinc finger spans residues 118-186 (MVDCLVCHKP…QWRCVKCPMA (69 aa)). The AWS domain maps to 283-326 (DGVGCTNCGPNCDRSCVCRVQCISCSKGCSCPESCGNRPFRKEK). In terms of domain architecture, SET spans 326-443 (KKIKIVKTEH…AGEPLTYDYR (118 aa)). Residues 449 to 465 (PEVKCNCGSENCQGYLG) enclose the Post-SET domain.

Belongs to the class V-like SAM-binding methyltransferase superfamily. Histone-lysine methyltransferase family. SET2 subfamily. Interacts with AMS/bHLH21 by its SET domain and PHD finger. Expressed in roots, flowers and buds, the anther and in stamen filaments.

The protein resides in the nucleus. It localises to the chromosome. It carries out the reaction L-lysyl-[histone] + S-adenosyl-L-methionine = N(6)-methyl-L-lysyl-[histone] + S-adenosyl-L-homocysteine + H(+). In terms of biological role, histone methyltransferase. Involved in stamen development. This Arabidopsis thaliana (Mouse-ear cress) protein is Histone-lysine N-methyltransferase ASHR3 (ASHR3).